The primary structure comprises 429 residues: Adenylosuccinate synthetase (429 aa).

Residues 12 to 18 and 40 to 42 contribute to the GTP site; these read GDEGKGK and GHT. Aspartate 13 acts as the Proton acceptor in catalysis. Residues aspartate 13 and glycine 40 each coordinate Mg(2+). Residues 13-16, 38-41, threonine 128, arginine 142, glutamine 223, threonine 238, and arginine 302 contribute to the IMP site; these read DEGK and NAGH. Histidine 41 (proton donor) is an active-site residue. 298-304 serves as a coordination point for substrate; sequence VNTGRPR. GTP contacts are provided by residues arginine 304, 330–332, and 412–414; these read KLD and GVG.

The protein belongs to the adenylosuccinate synthetase family. Homodimer. Mg(2+) serves as cofactor.

It localises to the cytoplasm. The enzyme catalyses IMP + L-aspartate + GTP = N(6)-(1,2-dicarboxyethyl)-AMP + GDP + phosphate + 2 H(+). Its pathway is purine metabolism; AMP biosynthesis via de novo pathway; AMP from IMP: step 1/2. Functionally, plays an important role in the de novo pathway of purine nucleotide biosynthesis. Catalyzes the first committed step in the biosynthesis of AMP from IMP. The chain is Adenylosuccinate synthetase from Pseudarthrobacter chlorophenolicus (strain ATCC 700700 / DSM 12829 / CIP 107037 / JCM 12360 / KCTC 9906 / NCIMB 13794 / A6) (Arthrobacter chlorophenolicus).